Consider the following 95-residue polypeptide: Small ubiquitin-related modifier 4 (95 aa).

Residues 17–95 enclose the Ubiquitin-like domain; that stretch reads HINLKVAGQD…VLQQQTGGVY (79 aa). Residue Gly-93 forms a Glycyl lysine isopeptide (Gly-Lys) (interchain with K-? in acceptor proteins) linkage. Residues 94–95 constitute a propeptide that is removed on maturation; it reads VY.

The protein belongs to the ubiquitin family. SUMO subfamily. As to quaternary structure, interacts with SAE2. Covalently attached to a number of proteins.

Functionally, ubiquitin-like protein which can be covalently attached to target lysines as a monomer. Does not seem to be involved in protein degradation and may modulate protein subcellular localization, stability or activity. Upon oxidative stress, conjugates to various anti-oxidant enzymes, chaperones, and stress defense proteins. May also conjugate to NFKBIA, TFAP2A and FOS, negatively regulating their transcriptional activity, and to NR3C1, positively regulating its transcriptional activity. Covalent attachment to its substrates requires prior activation by the E1 complex SAE1-SAE2 and linkage to the E2 enzyme UBE2I. This is Small ubiquitin-related modifier 4 (SUMO4) from Sus scrofa (Pig).